A 423-amino-acid chain; its full sequence is Glutamate-1-semialdehyde 2,1-aminomutase (423 aa).

Lys263 carries the post-translational modification N6-(pyridoxal phosphate)lysine.

The protein belongs to the class-III pyridoxal-phosphate-dependent aminotransferase family. HemL subfamily. Pyridoxal 5'-phosphate is required as a cofactor.

The protein resides in the cytoplasm. The catalysed reaction is (S)-4-amino-5-oxopentanoate = 5-aminolevulinate. It participates in porphyrin-containing compound metabolism; protoporphyrin-IX biosynthesis; 5-aminolevulinate from L-glutamyl-tRNA(Glu): step 2/2. The protein is Glutamate-1-semialdehyde 2,1-aminomutase of Ignicoccus hospitalis (strain KIN4/I / DSM 18386 / JCM 14125).